A 337-amino-acid polypeptide reads, in one-letter code: uncharacterized protein (337 aa).

Residues 248-276 (NELKAETTIQVLREQLRQEKKLKEQVLSL) are a coiled coil. The interval 285–337 (GGRGEEFGKPDETPSSASVGDDNFPSSTNHTFEARRRPSSLSSGGALKPSKIL) is disordered. Residues 287 to 296 (RGEEFGKPDE) show a composition bias toward basic and acidic residues. Positions 297-315 (TPSSASVGDDNFPSSTNHT) are enriched in polar residues.

This is an uncharacterized protein from Invertebrate iridescent virus 3 (IIV-3).